We begin with the raw amino-acid sequence, 930 residues long: Translation initiation factor IF-2 (930 aa).

The tract at residues 29–316 is disordered; sequence GEFVKSASST…GRKSKRAKRA (288 aa). Residues 81–120 are compositionally biased toward pro residues; that stretch reads RPGPKPGPPVAQQPAAPAAPPAAPPAPPTPAAAPPSPAPA. Over residues 121 to 135 the composition is skewed to low complexity; it reads APAAATPAEPAAPSA. Pro residues-rich tracts occupy residues 136-155 and 180-191; these read RPGP…PGAP and PRPQGPGGPRPG. The span at 192–204 shows a compositional bias: gly residues; it reads PGAGGPRPGGGPR. The segment covering 228–240 has biased composition (pro residues); that stretch reads GGGPRPGGGPRPT. Residues 241-301 show a composition bias toward gly residues; the sequence is PGGAGRPGGG…GAAGAFGRPG (61 aa). Positions 305–314 are enriched in basic residues; sequence KRGRKSKRAK. The tr-type G domain maps to 426-598; the sequence is IRPPVVTVMG…VILTADASLD (173 aa). The tract at residues 435 to 442 is G1; it reads GHVDHGKT. Residue 435–442 coordinates GTP; that stretch reads GHVDHGKT. A G2 region spans residues 460-464; it reads GITQH. The interval 485-488 is G3; that stretch reads DTPG. GTP is bound by residues 485 to 489 and 539 to 542; these read DTPGH and NKID. Residues 539 to 542 form a G4 region; sequence NKID. The G5 stretch occupies residues 575–577; it reads SAK.

It belongs to the TRAFAC class translation factor GTPase superfamily. Classic translation factor GTPase family. IF-2 subfamily.

It localises to the cytoplasm. One of the essential components for the initiation of protein synthesis. Protects formylmethionyl-tRNA from spontaneous hydrolysis and promotes its binding to the 30S ribosomal subunits. Also involved in the hydrolysis of GTP during the formation of the 70S ribosomal complex. The chain is Translation initiation factor IF-2 from Mycolicibacterium vanbaalenii (strain DSM 7251 / JCM 13017 / BCRC 16820 / KCTC 9966 / NRRL B-24157 / PYR-1) (Mycobacterium vanbaalenii).